Reading from the N-terminus, the 488-residue chain is Type II restriction enzyme HgaI (488 aa).

It catalyses the reaction Endonucleolytic cleavage of DNA to give specific double-stranded fragments with terminal 5'-phosphates.. An S subtype restriction enzyme that recognizes the double-stranded sequences 5'-GACGC-3' and 5'-GCGTC-3' and cleaves respectively 10 bases after G-1 and 10 bases before G'-1. This Avibacterium volantium (Pasteurella volantium) protein is Type II restriction enzyme HgaI (hgaIR).